We begin with the raw amino-acid sequence, 1027 residues long: C2 and GRAM domain-containing protein At5g50170 (1027 aa).

The C2 1 domain maps to 1-103 (MRLYVYILQA…ENQTLLPTWF (103 aa)). The segment covering 158–167 (SPKDLISSRD) has biased composition (basic and acidic residues). Disordered stretches follow at residues 158 to 177 (SPKDLISSRDGKRRKHHDGK) and 201 to 223 (LHDESSVGQSVNSNYEDATDQCS). The segment covering 168-177 (GKRRKHHDGK) has biased composition (basic residues). Residues 206 to 223 (SVGQSVNSNYEDATDQCS) are compositionally biased toward polar residues. The VASt 1 domain maps to 253-426 (TGGVLVDQKY…LLAKTYKTLD (174 aa)). A helical transmembrane segment spans residues 452-472 (FLYFWSSSVICAVLLSVYVVV). Residues 516 to 639 (TVHFVQARLH…TADELADLSV (124 aa)) form the C2 2 domain. The region spanning 693–756 (AFQKLFGLPH…LWEDIDDIQV (64 aa)) is the GRAM domain. The 164-residue stretch at 855–1018 (MMSKVYTCDL…VIFDLFQKES (164 aa)) folds into the VASt 2 domain.

It localises to the membrane. In Arabidopsis thaliana (Mouse-ear cress), this protein is C2 and GRAM domain-containing protein At5g50170.